Reading from the N-terminus, the 206-residue chain is Small ribosomal subunit protein uS4 (206 aa).

Positions Ala23–Asp47 are disordered. The S4 RNA-binding domain maps to Arg94–Val157.

Belongs to the universal ribosomal protein uS4 family. As to quaternary structure, part of the 30S ribosomal subunit. Contacts protein S5. The interaction surface between S4 and S5 is involved in control of translational fidelity.

Its function is as follows. One of the primary rRNA binding proteins, it binds directly to 16S rRNA where it nucleates assembly of the body of the 30S subunit. Functionally, with S5 and S12 plays an important role in translational accuracy. This Paracoccus denitrificans (strain Pd 1222) protein is Small ribosomal subunit protein uS4.